A 339-amino-acid polypeptide reads, in one-letter code: Deubiquitinase and deneddylase Dub2 (339 aa).

The helical transmembrane segment at 36 to 56 (IIIALFLIVISCGLILCAYTF) threads the bilayer. Catalysis depends on residues His203, Asp220, and Cys282.

It belongs to the peptidase C48 family.

It localises to the secreted. The protein resides in the host cell. The protein localises to the membrane. Functionally, effector proteins function to alter host cell physiology and promote bacterial survival in host tissues. This protease possesses deubiquitinating and deneddylating activities. The chain is Deubiquitinase and deneddylase Dub2 (cdu2) from Chlamydia trachomatis serovar L2 (strain ATCC VR-902B / DSM 19102 / 434/Bu).